The chain runs to 256 residues: Protein CUSTOS (256 aa).

The span at 1–19 shows a compositional bias: low complexity; the sequence is MVAPSGAMSDSENSSSSSS. Disordered stretches follow at residues 1-83, 127-163, and 227-256; these read MVAP…TPEF, FTSI…QRCR, and IQKK…KPEN. At serine 62 the chain carries Phosphoserine. The segment covering 63–83 has biased composition (basic and acidic residues); the sequence is RRHEVNQHEEDGNDLRTTPEF. Threonine 80 bears the Phosphothreonine mark. Phosphoserine is present on serine 139. The short motif at 228-235 is the Nucleolar localization signal (NLS) element; that stretch reads QKKRKKKA. The span at 228 to 237 shows a compositional bias: basic residues; the sequence is QKKRKKKAKK. The segment covering 246–256 has biased composition (low complexity); it reads PAECAAAKPEN.

It belongs to the CUSTOS family.

It is found in the nucleus envelope. Plays a role in the regulation of Wnt signaling pathway during early development. The polypeptide is Protein CUSTOS (Mus musculus (Mouse)).